Reading from the N-terminus, the 159-residue chain is Ribosomal RNA large subunit methyltransferase H (159 aa).

Residues Leu76, Gly108, and 127–132 (FSPMTF) each bind S-adenosyl-L-methionine.

The protein belongs to the RNA methyltransferase RlmH family. In terms of assembly, homodimer.

Its subcellular location is the cytoplasm. The catalysed reaction is pseudouridine(1915) in 23S rRNA + S-adenosyl-L-methionine = N(3)-methylpseudouridine(1915) in 23S rRNA + S-adenosyl-L-homocysteine + H(+). In terms of biological role, specifically methylates the pseudouridine at position 1915 (m3Psi1915) in 23S rRNA. This Alkaliphilus metalliredigens (strain QYMF) protein is Ribosomal RNA large subunit methyltransferase H.